The chain runs to 349 residues: Probable transporter vicT (349 aa).

The 129-residue stretch at 25–153 (IAAALLHALA…TALAGVVLVL (129 aa)) folds into the EamA domain. The next 9 membrane-spanning stretches (helical) occupy residues 49 to 69 (PFTV…AYLW), 89 to 109 (AAGG…LSLS), 111 to 131 (ATVL…YWEG), 133 to 153 (TFAF…VLVL), 179 to 199 (LKGV…FSAM), 215 to 235 (FGVS…EVVW), 244 to 264 (LLAI…AGLG), 269 to 289 (RVTI…WAIW), and 294 to 314 (NVLT…PYLF).

The protein belongs to the TPT transporter family. SLC35D subfamily.

Its subcellular location is the membrane. In terms of biological role, probable transporter; part of the gene cluster that mediates the biosynthesis of the secondary metabolite victorin, the molecular basis for Victoria blight of oats. The protein is Probable transporter vicT of Bipolaris victoriae (strain FI3) (Victoria blight of oats agent).